The primary structure comprises 252 residues: 3-deoxy-manno-octulosonate cytidylyltransferase (252 aa).

It belongs to the KdsB family.

It is found in the cytoplasm. It carries out the reaction 3-deoxy-alpha-D-manno-oct-2-ulosonate + CTP = CMP-3-deoxy-beta-D-manno-octulosonate + diphosphate. It participates in nucleotide-sugar biosynthesis; CMP-3-deoxy-D-manno-octulosonate biosynthesis; CMP-3-deoxy-D-manno-octulosonate from 3-deoxy-D-manno-octulosonate and CTP: step 1/1. Its pathway is bacterial outer membrane biogenesis; lipopolysaccharide biosynthesis. In terms of biological role, activates KDO (a required 8-carbon sugar) for incorporation into bacterial lipopolysaccharide in Gram-negative bacteria. This Vibrio cholerae serotype O1 (strain ATCC 39315 / El Tor Inaba N16961) protein is 3-deoxy-manno-octulosonate cytidylyltransferase.